We begin with the raw amino-acid sequence, 170 residues long: RNA pyrophosphohydrolase (170 aa).

In terms of domain architecture, Nudix hydrolase spans 8-151 (PYRPNVGIAL…KKALYAELIP (144 aa)). The short motif at 42–63 (GGIDEGETPQVAALREMGEEIG) is the Nudix box element.

It belongs to the Nudix hydrolase family. RppH subfamily. A divalent metal cation serves as cofactor.

Accelerates the degradation of transcripts by removing pyrophosphate from the 5'-end of triphosphorylated RNA, leading to a more labile monophosphorylated state that can stimulate subsequent ribonuclease cleavage. The chain is RNA pyrophosphohydrolase from Gluconobacter oxydans (strain 621H) (Gluconobacter suboxydans).